A 609-amino-acid polypeptide reads, in one-letter code: DNA mismatch repair protein MutL (609 aa).

A disordered region spans residues 364–386; that stretch reads SVNSKPTDYRPAMSPSFKSTPNT.

It belongs to the DNA mismatch repair MutL/HexB family.

Functionally, this protein is involved in the repair of mismatches in DNA. It is required for dam-dependent methyl-directed DNA mismatch repair. May act as a 'molecular matchmaker', a protein that promotes the formation of a stable complex between two or more DNA-binding proteins in an ATP-dependent manner without itself being part of a final effector complex. This Rickettsia akari (strain Hartford) protein is DNA mismatch repair protein MutL.